Here is a 432-residue protein sequence, read N- to C-terminus: Ribosomal protein uS12 methylthiotransferase RimO (432 aa).

One can recognise an MTTase N-terminal domain in the interval 4-122 (NTIDIITLGC…LLADLGKAYK (119 aa)). [4Fe-4S] cluster contacts are provided by Cys-13, Cys-51, Cys-85, Cys-146, Cys-150, and Cys-153. A Radical SAM core domain is found at 132–363 (TTPHHYAYLK…MALQQEIAGE (232 aa)). The region spanning 366 to 432 (QTKIGKEFKV…DDFDLYASIL (67 aa)) is the TRAM domain.

It belongs to the methylthiotransferase family. RimO subfamily. The cofactor is [4Fe-4S] cluster.

Its subcellular location is the cytoplasm. It catalyses the reaction L-aspartate(89)-[ribosomal protein uS12]-hydrogen + (sulfur carrier)-SH + AH2 + 2 S-adenosyl-L-methionine = 3-methylsulfanyl-L-aspartate(89)-[ribosomal protein uS12]-hydrogen + (sulfur carrier)-H + 5'-deoxyadenosine + L-methionine + A + S-adenosyl-L-homocysteine + 2 H(+). In terms of biological role, catalyzes the methylthiolation of an aspartic acid residue of ribosomal protein uS12. The protein is Ribosomal protein uS12 methylthiotransferase RimO of Phocaeicola vulgatus (strain ATCC 8482 / DSM 1447 / JCM 5826 / CCUG 4940 / NBRC 14291 / NCTC 11154) (Bacteroides vulgatus).